We begin with the raw amino-acid sequence, 348 residues long: MNPYVLMILMSSLGLGTTLTFSSSHWILAWMGLEINTLAIVPLMAQQHHPRAVEATTKYFLIQAAAAAMILFTSTTNAWISGQWDVTGMPGPATSTAMMFALALKIGLAPMHFWLPEVLQGLDLLTGLILSTWQKLAPMALIIQTTQTTDPLILTSLGIASSLIGGWSGLNQTQLRKILAYSSIAHMGWMIIVIQYAPQLTLIALGTYIFMTSAAFLTLKVLSATKINTLTTTWPKSPILAAIATLVMLSLGGLPPLTGFMPKWLILQELTKQDLPATATIMALTALLSLFFYLRLCHAMTLTTSPNTINSAPHWRVQTTQNSLPLTISVTVTMGLLPLTPAILMLTT.

A run of 11 helical transmembrane segments spans residues 1–21 (MNPY…TLTF), 25–45 (HWIL…PLMA), 60–80 (FLIQ…NAWI), 99–119 (MFAL…PEVL), 124–144 (LLTG…LIIQ), 151–171 (PLIL…SGLN), 178–197 (ILAY…IQYA), 202–224 (LIAL…VLSA), 239–259 (ILAA…PLTG), 274–294 (DLPA…FFYL), and 326–346 (LTIS…ILML).

It belongs to the complex I subunit 2 family. In terms of assembly, core subunit of respiratory chain NADH dehydrogenase (Complex I) which is composed of 45 different subunits.

It localises to the mitochondrion inner membrane. The catalysed reaction is a ubiquinone + NADH + 5 H(+)(in) = a ubiquinol + NAD(+) + 4 H(+)(out). In terms of biological role, core subunit of the mitochondrial membrane respiratory chain NADH dehydrogenase (Complex I) which catalyzes electron transfer from NADH through the respiratory chain, using ubiquinone as an electron acceptor. Essential for the catalytic activity and assembly of complex I. This Danio rerio (Zebrafish) protein is NADH-ubiquinone oxidoreductase chain 2 (mt-nd2).